The chain runs to 741 residues: Catalase-peroxidase (741 aa).

A signal peptide spans 1-23 (MLKKIVTALGMSGMLLASSNAIA). Residues 102-223 (WHDAGTYRIY…YAATQMGLIY (122 aa)) constitute a cross-link (tryptophyl-tyrosyl-methioninium (Trp-Tyr) (with M-249)). His-103 serves as the catalytic Proton acceptor. A cross-link (tryptophyl-tyrosyl-methioninium (Tyr-Met) (with W-102)) is located at residues 223-249 (YVNPEGPDGKPDIKGAASEIRQAFRAM). His-264 is a heme b binding site.

It belongs to the peroxidase family. Peroxidase/catalase subfamily. In terms of assembly, homodimer or homotetramer. It depends on heme b as a cofactor. Formation of the three residue Trp-Tyr-Met cross-link is important for the catalase, but not the peroxidase activity of the enzyme.

The enzyme catalyses H2O2 + AH2 = A + 2 H2O. It catalyses the reaction 2 H2O2 = O2 + 2 H2O. In terms of biological role, bifunctional enzyme with both catalase and broad-spectrum peroxidase activity. The sequence is that of Catalase-peroxidase from Francisella tularensis subsp. tularensis (strain WY96-3418).